We begin with the raw amino-acid sequence, 386 residues long: Glucose-1-phosphate adenylyltransferase (386 aa).

Alpha-D-glucose 1-phosphate is bound by residues Tyr-100, Gly-165, 180 to 181, and Ser-191; that span reads EK.

The protein belongs to the bacterial/plant glucose-1-phosphate adenylyltransferase family. Homotetramer.

The enzyme catalyses alpha-D-glucose 1-phosphate + ATP + H(+) = ADP-alpha-D-glucose + diphosphate. It participates in glycan biosynthesis; glycogen biosynthesis. Functionally, involved in the biosynthesis of ADP-glucose, a building block required for the elongation reactions to produce glycogen. Catalyzes the reaction between ATP and alpha-D-glucose 1-phosphate (G1P) to produce pyrophosphate and ADP-Glc. This is Glucose-1-phosphate adenylyltransferase from Clostridium botulinum (strain Eklund 17B / Type B).